The primary structure comprises 626 residues: ATP-dependent zinc metalloprotease FtsH 3 (626 aa).

Over 1-7 (MNKLFRS) the chain is Cytoplasmic. A helical membrane pass occupies residues 8 to 28 (LAFYMLILVISVAIAVQLGGT). Over 29–103 (SQQTTQLVYS…LDFRQDNTSG (75 aa)) the chain is Extracellular. Residues 104 to 124 (IWAMLLQTLVPVVLVLLAFFF) form a helical membrane-spanning segment. Over 125–626 (IMQQTQGSGN…GGTSQVAPAF (502 aa)) the chain is Cytoplasmic. 197-204 (GPPGTGKT) lines the ATP pocket. Histidine 420 serves as a coordination point for Zn(2+). Residue glutamate 421 is part of the active site. Zn(2+) is bound by residues histidine 424 and aspartate 496. The segment at 602–626 (PPRPKPEPLKPRMVGGGTSQVAPAF) is disordered.

The protein in the central section; belongs to the AAA ATPase family. In the C-terminal section; belongs to the peptidase M41 family. Homohexamer. Zn(2+) serves as cofactor.

The protein resides in the cell membrane. In terms of biological role, acts as a processive, ATP-dependent zinc metallopeptidase for both cytoplasmic and membrane proteins. Plays a role in the quality control of integral membrane proteins. This Symbiobacterium thermophilum (strain DSM 24528 / JCM 14929 / IAM 14863 / T) protein is ATP-dependent zinc metalloprotease FtsH 3.